A 261-amino-acid chain; its full sequence is tRNA pseudouridine synthase A (261 aa).

The Nucleophile role is filled by aspartate 51. Tyrosine 109 contacts substrate.

Belongs to the tRNA pseudouridine synthase TruA family. As to quaternary structure, homodimer.

It carries out the reaction uridine(38/39/40) in tRNA = pseudouridine(38/39/40) in tRNA. Formation of pseudouridine at positions 38, 39 and 40 in the anticodon stem and loop of transfer RNAs. The protein is tRNA pseudouridine synthase A of Shewanella sp. (strain MR-7).